The following is a 276-amino-acid chain: Large ribosomal subunit protein uL2 (276 aa).

Disordered regions lie at residues 37-59 (QFQK…GGHK) and 224-276 (VAMN…RHKR). The segment covering 50–59 (TTRHKGGGHK) has biased composition (basic residues).

It belongs to the universal ribosomal protein uL2 family. Part of the 50S ribosomal subunit. Forms a bridge to the 30S subunit in the 70S ribosome.

In terms of biological role, one of the primary rRNA binding proteins. Required for association of the 30S and 50S subunits to form the 70S ribosome, for tRNA binding and peptide bond formation. It has been suggested to have peptidyltransferase activity; this is somewhat controversial. Makes several contacts with the 16S rRNA in the 70S ribosome. This chain is Large ribosomal subunit protein uL2, found in Ralstonia nicotianae (strain ATCC BAA-1114 / GMI1000) (Ralstonia solanacearum).